A 396-amino-acid chain; its full sequence is Elongation factor Tu (396 aa).

A tr-type G domain is found at 10 to 206; it reads KPHCNIGTIG…AVDAYIPQPE (197 aa). The segment at 19 to 26 is G1; it reads GHVDHGKT. Residue 19-26 participates in GTP binding; it reads GHVDHGKT. Threonine 26 contributes to the Mg(2+) binding site. Residues 60-64 are G2; that stretch reads GITIS. Residues 81–84 are G3; it reads DCPG. GTP-binding positions include 81-85 and 136-139; these read DCPGH and NKVD. The tract at residues 136–139 is G4; the sequence is NKVD. The tract at residues 174–176 is G5; it reads SAL.

Belongs to the TRAFAC class translation factor GTPase superfamily. Classic translation factor GTPase family. EF-Tu/EF-1A subfamily. Monomer.

The protein localises to the cytoplasm. It catalyses the reaction GTP + H2O = GDP + phosphate + H(+). Functionally, GTP hydrolase that promotes the GTP-dependent binding of aminoacyl-tRNA to the A-site of ribosomes during protein biosynthesis. This chain is Elongation factor Tu, found in Granulibacter bethesdensis (strain ATCC BAA-1260 / CGDNIH1).